We begin with the raw amino-acid sequence, 114 residues long: uncharacterized protein (114 aa).

The HIT domain occupies 6 to 114 (IFGKIIRREI…GGRSLAWPPG (109 aa)). Positions 98 to 102 (HLHIH) match the Histidine triad motif motif.

This is an uncharacterized protein from Synechococcus elongatus (strain ATCC 33912 / PCC 7942 / FACHB-805) (Anacystis nidulans R2).